The sequence spans 458 residues: Phosphomethylpyrimidine synthase (458 aa).

Residues Asn-80, Met-109, Tyr-139, His-175, Ser-195–Gly-197, Asp-236–Arg-239, and Glu-275 each bind substrate. His-279 contacts Zn(2+). Substrate is bound at residue Tyr-302. Zn(2+) is bound at residue His-343. [4Fe-4S] cluster contacts are provided by Cys-423, Cys-426, and Cys-431.

The protein belongs to the ThiC family. The cofactor is [4Fe-4S] cluster.

The enzyme catalyses 5-amino-1-(5-phospho-beta-D-ribosyl)imidazole + S-adenosyl-L-methionine = 4-amino-2-methyl-5-(phosphooxymethyl)pyrimidine + CO + 5'-deoxyadenosine + formate + L-methionine + 3 H(+). Its pathway is cofactor biosynthesis; thiamine diphosphate biosynthesis. Catalyzes the synthesis of the hydroxymethylpyrimidine phosphate (HMP-P) moiety of thiamine from aminoimidazole ribotide (AIR) in a radical S-adenosyl-L-methionine (SAM)-dependent reaction. The sequence is that of Phosphomethylpyrimidine synthase from Acaryochloris marina (strain MBIC 11017).